A 587-amino-acid polypeptide reads, in one-letter code: Probable pectinesterase/pectinesterase inhibitor 61 (587 aa).

A disordered region spans residues 1–23 (MGYDRLGPSGPSNPNQKDPATSL). The segment covering 10 to 19 (GPSNPNQKDP) has biased composition (polar residues). Residues 35-55 (ILFTLAVLVVGVVCFGIFAGI) traverse the membrane as a helical segment. The segment at 69-223 (RKPTQAISRT…SEMVSNCLAI (155 aa)) is pectinesterase inhibitor 61. The segment at 273 to 571 (DITVSKDGSG…FTVAQFISGS (299 aa)) is pectinesterase 61. Positions 349 and 379 each coordinate substrate. Aspartate 402 (proton donor; for pectinesterase activity) is an active-site residue. Cysteine 416 and cysteine 436 form a disulfide bridge. The Nucleophile; for pectinesterase activity role is filled by aspartate 423. Positions 491 and 493 each coordinate substrate.

It in the N-terminal section; belongs to the PMEI family. This sequence in the C-terminal section; belongs to the pectinesterase family. Expressed in siliques, floral stems and rosettes leaves.

The protein localises to the membrane. The catalysed reaction is [(1-&gt;4)-alpha-D-galacturonosyl methyl ester](n) + n H2O = [(1-&gt;4)-alpha-D-galacturonosyl](n) + n methanol + n H(+). It participates in glycan metabolism; pectin degradation; 2-dehydro-3-deoxy-D-gluconate from pectin: step 1/5. In terms of biological role, acts in the modification of cell walls via demethylesterification of cell wall pectin. In Arabidopsis thaliana (Mouse-ear cress), this protein is Probable pectinesterase/pectinesterase inhibitor 61 (PME61).